Reading from the N-terminus, the 169-residue chain is Chorion protein E1 (169 aa).

Residues 1-19 (MAWFTTVLIVASLLGSLVA) form the signal peptide. Tetradecapeptide repeat units follow at residues 114–127 (GAGR…KPRS) and 128–141 (GAGK…KPKS). Residues 119–169 (AEMEGKPRSGAGKGAEMEGKPKSTESVAETNTVAAGTGVVAEKTGTESSAS) are disordered. Positions 142 to 152 (TESVAETNTVA) are enriched in polar residues.

Its function is as follows. This protein is one of two components of the prominent 'filler' that helps mold the shape of aeropyle crowns. This is Chorion protein E1 from Antheraea polyphemus (Polyphemus moth).